Reading from the N-terminus, the 293-residue chain is Ribosomal protein L11 methyltransferase (293 aa).

4 residues coordinate S-adenosyl-L-methionine: Thr-145, Gly-166, Asp-188, and Asn-230.

Belongs to the methyltransferase superfamily. PrmA family.

Its subcellular location is the cytoplasm. The catalysed reaction is L-lysyl-[protein] + 3 S-adenosyl-L-methionine = N(6),N(6),N(6)-trimethyl-L-lysyl-[protein] + 3 S-adenosyl-L-homocysteine + 3 H(+). Methylates ribosomal protein L11. The polypeptide is Ribosomal protein L11 methyltransferase (Shewanella piezotolerans (strain WP3 / JCM 13877)).